The following is a 1182-amino-acid chain: Lysine-specific demethylase hairless (1182 aa).

Disordered stretches follow at residues 227-257, 302-380, 411-443, and 507-546; these read LGLA…GAGR, YQLG…KKTW, AGSP…ARAW, and TGHS…ASLN. A compositionally biased stretch (pro residues) spans 307–321; it reads PATPRCPSPGPPTPP. Residues 561-565 carry the LXXLL motif 1 motif; that stretch reads LCRLL. The C6-type zinc-finger motif lies at 595–620; it reads CSRCHHGLFNTHWRCSHCSHRLCVAC. The interval 697 to 746 is disordered; it reads GDGGQQKEPTEKTPPTPQPSCNGDSNRTKDIKEETPDSTESPAEDGAGRS. Positions 722–731 are enriched in basic and acidic residues; it reads NRTKDIKEET. The short motif at 753-757 is the LXXLL motif 2 element; it reads LCELL. Residues 939–1150 form the JmjC domain; that stretch reads DASRVQNLAS…LSAQLYHQGA (212 aa). The Fe cation site is built by Cys1000, Glu1002, and His1118.

Fe(2+) is required as a cofactor. Expressed predominantly in brain, hair follicles and interfollicular epidermis. No expression in dermis.

Its subcellular location is the nucleus. It catalyses the reaction N(6),N(6)-dimethyl-L-lysyl(9)-[histone H3] + 2 2-oxoglutarate + 2 O2 = L-lysyl(9)-[histone H3] + 2 formaldehyde + 2 succinate + 2 CO2. Its function is as follows. Histone demethylase that specifically demethylates both mono- and dimethylated 'Lys-9' of histone H3. May act as a transcription regulator controlling hair biology (via targeting of collagens), neural activity, and cell cycle. This chain is Lysine-specific demethylase hairless (Hr), found in Mus musculus (Mouse).